The chain runs to 248 residues: Probable transcriptional regulatory protein LAR_0538 (248 aa).

The interval 1–22 (MSGHSKWHNIQGRKNAQDAKRG) is disordered.

It belongs to the TACO1 family.

It is found in the cytoplasm. The protein is Probable transcriptional regulatory protein LAR_0538 of Limosilactobacillus reuteri subsp. reuteri (strain JCM 1112) (Lactobacillus reuteri).